The following is a 963-amino-acid chain: MLGSIAKKIFGSSNDRRVKGYRPRVAQINALEPEIQALSDEALRARTDMLKAELANGKSLDDILVPAFATVREAAKRVFGQRHFDVQLIGGMVLHEGGIAEMKTGEGKTLVATLPVYLNALEGKGVHVVTVNDYLASRDAEWMGQVYRFLGLSVGTIVHGLDDAQRKEAYACDITYGTNNEYGFDYLRDNMKYELSQLAQRGHNFAIVDEVDSILIDEARTPLIISGPVDDRSELYVAVDALMPRLRKEFYDLDEKQRTVSLTEEGNEFIEEAMREAGLLKEGDLYDAHNVTLVHHVNQALRAHTLFTRDKDYIVKNDEVVIIDEFTGRMMQGRRYSEGLHQALEAKERVTIQPENQTLASITFQNYFRLYKKLAGMTGTASTEADEFAEIYKLDVVDIPTNKEVERVDEDDEVYRTVGEKYEGIIAEIDKAHARHQPILVGTGSIEKSEHLAEMLKKAGYSLLDYSDPNALTDVYAAAREGRVTKRFAVLNARFHEQEAYIVAEAGVPGAITIATNMAGRGTDIKLGGNLEMRIEKELGHLADGPERDAAIAAIKAEIAENRTKVLASGEPADPAAGRKKDLPGGLYIIGTERHESRRIDNQLRGRSGRQGDPGRSKFYLSLQDDLMRIFGSDRMDGMLQKLGLEQGEAIIHPWINKAIEKAQQKVEARNFDMRKNVLKYDNVMNDQRKVVFEQRRDFMGQDSVRETVDEMREGVIDDLVARHIPENAYAEQWDVAGLREQVKEILNLDVPVEDWAKEEGIADEEMRERLLKAAETAYAERTEKNGAEVTAYIEKQVLLQTLDHLWREHLVTLDHLRQVIGWRGFAQRDPLNEYKSEAFDLFNGLVTALREQVTAQLSRVEIMLQEPPAEFPAGGPALPPMFAQHLDPVTGENEMDYAGFGSGSDGGGGPAYGFAAQGLAADGAVLERDPTDANTWGRVGRNEPCPCGSGKKYKHCHGSLQA.

Residues Gln87, 105–109, and Asp524 contribute to the ATP site; that span reads GEGKT. Zn(2+) contacts are provided by Cys946, Cys948, Cys957, and His958.

It belongs to the SecA family. Monomer and homodimer. Part of the essential Sec protein translocation apparatus which comprises SecA, SecYEG and auxiliary proteins SecDF-YajC and YidC. The cofactor is Zn(2+).

It is found in the cell inner membrane. Its subcellular location is the cytoplasm. The enzyme catalyses ATP + H2O + cellular proteinSide 1 = ADP + phosphate + cellular proteinSide 2.. Functionally, part of the Sec protein translocase complex. Interacts with the SecYEG preprotein conducting channel. Has a central role in coupling the hydrolysis of ATP to the transfer of proteins into and across the cell membrane, serving both as a receptor for the preprotein-SecB complex and as an ATP-driven molecular motor driving the stepwise translocation of polypeptide chains across the membrane. The protein is Protein translocase subunit SecA of Methylobacterium radiotolerans (strain ATCC 27329 / DSM 1819 / JCM 2831 / NBRC 15690 / NCIMB 10815 / 0-1).